The following is a 196-amino-acid chain: Nucleoside triphosphate pyrophosphatase (196 aa).

D73 serves as the catalytic Proton acceptor.

The protein belongs to the Maf family. The cofactor is a divalent metal cation.

The protein resides in the cytoplasm. The catalysed reaction is a ribonucleoside 5'-triphosphate + H2O = a ribonucleoside 5'-phosphate + diphosphate + H(+). It catalyses the reaction a 2'-deoxyribonucleoside 5'-triphosphate + H2O = a 2'-deoxyribonucleoside 5'-phosphate + diphosphate + H(+). Functionally, nucleoside triphosphate pyrophosphatase. May have a dual role in cell division arrest and in preventing the incorporation of modified nucleotides into cellular nucleic acids. This Chlamydia pneumoniae (Chlamydophila pneumoniae) protein is Nucleoside triphosphate pyrophosphatase.